The sequence spans 300 residues: PAK4-inhibitor INKA2 (300 aa).

Disordered regions lie at residues 59 to 104, 178 to 201, and 230 to 288; these read GGTP…SSPK, LEKG…GQSR, and KEKP…LEPS. A compositionally biased stretch (polar residues) spans 60-73; sequence GTPTFSCPESSQEQ. Low complexity predominate over residues 93–102; the sequence is SSSQPSFDSS. The interval 140–183 is inka box; it reads EPDDWTSTLMSRGRNRQPLVLGDNVFADLVGNWLDLPELEKGGE. Basic residues predominate over residues 246-256; it reads GRSKKVKKRSL.

Belongs to the INKA family. In terms of assembly, interacts with PAK4. In terms of tissue distribution, enriched in the nervous system.

It is found in the nucleus. Inhibitor of the serine/threonine-protein kinase PAK4. Acts by binding PAK4 in a substrate-like manner, inhibiting the protein kinase activity. This is PAK4-inhibitor INKA2 from Mus musculus (Mouse).